The primary structure comprises 98 residues: Prolactin-releasing peptide (98 aa).

The first 22 residues, 1 to 22, serve as a signal peptide directing secretion; sequence MKAVGAWLLCLLLLGLALQGAA. The residue at position 53 (F53) is a Phenylalanine amide. Positions 58–98 are excised as a propeptide; that stretch reads AAPGDGPRPGPRRELACIPLEGGAEPSRALLGRLTAQLVQE.

As to expression, more abundantly expressed in the brainstem than the hypothalamus.

Its subcellular location is the secreted. In terms of biological role, stimulates prolactin (PRL) release and regulates the expression of prolactin through its receptor GPR10. May stimulate lactotrophs directly to secrete PRL. This is Prolactin-releasing peptide (PRLH) from Ovis aries (Sheep).